A 113-amino-acid polypeptide reads, in one-letter code: MTAQLHMMSDKHDQDNDASVLLQTRPRTKRPPLYKVLLLNDDYTPMEFVVHVLERFFGMNHAQAFEIMLTVHKKGVAVVGVFSHEIAETKVSLVMDFARRHQHPLQCTMEKED.

The segment at 1-24 (MTAQLHMMSDKHDQDNDASVLLQT) is disordered.

It belongs to the ClpS family. In terms of assembly, binds to the N-terminal domain of the chaperone ClpA.

Functionally, involved in the modulation of the specificity of the ClpAP-mediated ATP-dependent protein degradation. In Ruegeria pomeroyi (strain ATCC 700808 / DSM 15171 / DSS-3) (Silicibacter pomeroyi), this protein is ATP-dependent Clp protease adapter protein ClpS.